Here is a 317-residue protein sequence, read N- to C-terminus: Apolipoprotein E (317 aa).

The N-terminal stretch at 1-18 is a signal peptide; that stretch reads MRVLWVALVVTLLAGCRT. 8 tandem repeats follow at residues 79–100, 101–122, 123–144, 145–166, 167–188, 189–210, 211–232, and 233–254. Residues 79 to 254 are 8 X 22 AA approximate tandem repeats; it reads ELIEESMKEV…RLDEMRDELE (176 aa). Position 142 is a methionine sulfoxide (Met-142). The tract at residues 157 to 167 is LDL and other lipoprotein receptors binding; it reads HLRNVRKRLVR. Position 161 to 164 (161 to 164) interacts with heparin; sequence VRKR. The segment at 209–289 is lipid-binding and lipoprotein association; the sequence is AATLSTRAGQ…GWFEPLVEDM (81 aa). Residue 228 to 235 coordinates heparin; it reads GQKLRGRL. Residues 265 to 317 are homooligomerization; the sequence is SQLRLQAEAFQARLKGWFEPLVEDMRRQWAGLVERMQSAVSISSSTSAPSDNQ. The interval 277–289 is specificity for association with VLDL; sequence RLKGWFEPLVEDM.

This sequence belongs to the apolipoprotein A1/A4/E family. Homotetramer. May interact with ABCA1; functionally associated with ABCA1 in the biogenesis of HDLs. May interact with APP/A4 amyloid-beta peptide; the interaction is extremely stable in vitro but its physiological significance is unclear. May interact with MAPT. May interact with MAP2. In the cerebrospinal fluid, interacts with secreted SORL1. Interacts with PMEL; this allows the loading of PMEL luminal fragment on ILVs to induce fibril nucleation. In terms of processing, APOE exists as multiple glycosylated and sialylated glycoforms within cells and in plasma. The extent of glycosylation and sialylation are tissue and context specific. Glycated in plasma VLDL. Post-translationally, phosphorylated by FAM20C in the extracellular medium.

It is found in the secreted. It localises to the extracellular space. The protein localises to the extracellular matrix. The protein resides in the extracellular vesicle. Its subcellular location is the endosome. It is found in the multivesicular body. APOE is an apolipoprotein, a protein associating with lipid particles, that mainly functions in lipoprotein-mediated lipid transport between organs via the plasma and interstitial fluids. APOE is a core component of plasma lipoproteins and is involved in their production, conversion and clearance. Apolipoproteins are amphipathic molecules that interact both with lipids of the lipoprotein particle core and the aqueous environment of the plasma. As such, APOE associates with chylomicrons, chylomicron remnants, very low density lipoproteins (VLDL) and intermediate density lipoproteins (IDL) but shows a preferential binding to high-density lipoproteins (HDL). It also binds a wide range of cellular receptors including the LDL receptor/LDLR and the very low-density lipoprotein receptor/VLDLR that mediate the cellular uptake of the APOE-containing lipoprotein particles. Finally, APOE also has a heparin-binding activity and binds heparan-sulfate proteoglycans on the surface of cells, a property that supports the capture and the receptor-mediated uptake of APOE-containing lipoproteins by cells. The protein is Apolipoprotein E (APOE) of Sus scrofa (Pig).